Reading from the N-terminus, the 204-residue chain is Probable UMP-CMP kinase 1 (204 aa).

31–36 (GSGKGT) provides a ligand contact to ATP. Residues 51 to 80 (SAGDLLRAEIKSGSEFGAMIQSMIAEGRIV) are NMP. A ribonucleoside 5'-phosphate-binding positions include Arg57, 78 to 80 (RIV), and 105 to 108 (GFPR). Asn112 provides a ligand contact to CMP. The tract at residues 143–151 (SRNQGREDD) is LID. Arg144 serves as a coordination point for ATP. A ribonucleoside 5'-phosphate is bound by residues Arg148 and Arg159. ATP is bound at residue Lys187.

The protein belongs to the adenylate kinase family. UMP-CMP kinase subfamily. In terms of assembly, monomer. Mg(2+) serves as cofactor.

Its subcellular location is the cytoplasm. The protein resides in the nucleus. It carries out the reaction CMP + ATP = CDP + ADP. The catalysed reaction is dCMP + ATP = dCDP + ADP. It catalyses the reaction UMP + ATP = UDP + ADP. Catalyzes the phosphorylation of pyrimidine nucleoside monophosphates at the expense of ATP. Plays an important role in de novo pyrimidine nucleotide biosynthesis. Has preference for UMP and CMP as phosphate acceptors. In Arabidopsis thaliana (Mouse-ear cress), this protein is Probable UMP-CMP kinase 1 (UMK1).